The chain runs to 443 residues: Glutamate--tRNA ligase 2 (443 aa).

The 'HIGH' region motif lies at 7-17; sequence PSPTGYLHVGN. Residues 236 to 240 carry the 'KMSKS' region motif; it reads KISKR. An ATP-binding site is contributed by K239.

Belongs to the class-I aminoacyl-tRNA synthetase family. Glutamate--tRNA ligase type 1 subfamily. In terms of assembly, monomer.

Its subcellular location is the cytoplasm. It carries out the reaction tRNA(Glu) + L-glutamate + ATP = L-glutamyl-tRNA(Glu) + AMP + diphosphate. Catalyzes the attachment of glutamate to tRNA(Glu) in a two-step reaction: glutamate is first activated by ATP to form Glu-AMP and then transferred to the acceptor end of tRNA(Glu). The polypeptide is Glutamate--tRNA ligase 2 (Ehrlichia canis (strain Jake)).